Reading from the N-terminus, the 228-residue chain is FtsZ-localized protein A (228 aa).

The region spanning 3–85 (VERTLHHFPL…HIEETETEPP (83 aa)) is the GST N-terminal domain. One can recognise a GST C-terminal domain in the interval 90–223 (DPAERAEARR…WPGLAPAAHY (134 aa)).

The protein belongs to the GST superfamily. Homodimer. Interacts with FtsZ filaments. Probably interacts with the GTPase domain of FtsZ.

It is found in the cytoplasm. In terms of biological role, essential cell division protein that must bind to FtsZ for division to occur. Critical coordinator of envelope constriction through its interaction with FtsZ. Promotes the formation of highly curved FtsZ filaments, reduces the GTPase activity of FtsZ and stabilizes FtsZ polymers. May regulate FtsZ function by modulating its superstructure. Does not bind to glutathione. In Caulobacter vibrioides (strain NA1000 / CB15N) (Caulobacter crescentus), this protein is FtsZ-localized protein A.